The primary structure comprises 235 residues: Protein C1orf43 homolog (235 aa).

A helical transmembrane segment spans residues 11-31 (VNVVLVMAYGSLVFVLLFIFV).

It is found in the membrane. Its subcellular location is the golgi apparatus. The protein localises to the mitochondrion. Its function is as follows. General regulator of phagocytosis. Required to uptake Gram negative bacterium by macrophages. This chain is Protein C1orf43 homolog, found in Rattus norvegicus (Rat).